A 348-amino-acid polypeptide reads, in one-letter code: AT-hook motif nuclear-localized protein 9 (348 aa).

Positions 18–156 (HRGLSGSGPP…MASVGELMPS (139 aa)) are disordered. Over residues 31–46 (GSPQQQQGLRHLPNQN) the composition is skewed to polar residues. Residues 47-60 (SPFGSGSTGFGSPS) are compositionally biased toward low complexity. Residues 98–106 (KRKRGRPRK) carry the Bipartite nuclear localization signal motif. A DNA-binding region (a.T hook 1) is located at residues 98 to 110 (KRKRGRPRKYGQD). Over residues 112–131 (SVSLALSSSSVSTITPNNSN) the composition is skewed to low complexity. The segment at residues 132 to 144 (KRGRGRPPGSGKK) is a DNA-binding region (a.T hook 2). In terms of domain architecture, PPC spans 157-299 (SSGMSFTPHV…EEEASEVVQE (143 aa)).

It localises to the nucleus. In terms of biological role, transcription factor that specifically binds AT-rich DNA sequences related to the nuclear matrix attachment regions (MARs). The sequence is that of AT-hook motif nuclear-localized protein 9 from Arabidopsis thaliana (Mouse-ear cress).